We begin with the raw amino-acid sequence, 434 residues long: Trigger factor (434 aa).

The PPIase FKBP-type domain occupies 160 to 245 (GDKVKMNFVG…LTEVLAANLP (86 aa)).

This sequence belongs to the FKBP-type PPIase family. Tig subfamily.

It localises to the cytoplasm. The enzyme catalyses [protein]-peptidylproline (omega=180) = [protein]-peptidylproline (omega=0). In terms of biological role, involved in protein export. Acts as a chaperone by maintaining the newly synthesized protein in an open conformation. Functions as a peptidyl-prolyl cis-trans isomerase. The chain is Trigger factor from Shewanella sp. (strain ANA-3).